Reading from the N-terminus, the 389-residue chain is Alpha carbonic anhydrase 8 (389 aa).

The first 22 residues, Met-1 to Ser-22, serve as a signal peptide directing secretion. Residues Ser-21 to Trp-153 are disordered. A compositionally biased stretch (pro residues) spans Ala-25–Ala-129. The Alpha-carbonic anhydrase domain maps to Thr-138–Lys-374. Cys-163 and Cys-324 are oxidised to a cystine. Residue Asn-196 is glycosylated (N-linked (GlcNAc...) asparagine). Catalysis depends on His-204, which acts as the Proton acceptor. Residues His-232, His-234, and His-251 each coordinate Zn(2+). Residue Thr-320–Ala-321 coordinates substrate. Asn-385 is a glycosylation site (N-linked (GlcNAc...) asparagine).

The protein belongs to the alpha-class carbonic anhydrase family. It depends on Zn(2+) as a cofactor. Post-translationally, N-glycosylated.

It localises to the plastid. The protein localises to the chloroplast stroma. The catalysed reaction is hydrogencarbonate + H(+) = CO2 + H2O. In terms of biological role, reversible hydration of carbon dioxide. The chain is Alpha carbonic anhydrase 8 (ACA8) from Arabidopsis thaliana (Mouse-ear cress).